Here is an 853-residue protein sequence, read N- to C-terminus: MDMQVQRPITSGSRQAPDPYDQYLESRGLYRKHTARDASSLFRVIAEQMYDTQMLHYEIRLECVRFMTLKRRIFEKEIPGDFDSYMQDMSKPKTYGTMTELRAMSCLYRRNVILYEPYNMGTSVVFNRRYAENFRVFFNNENHFDSVYDVEYIERAAICQSIAFKLLYQKLFKLPDVSFAVEIMLHPHTFNWDRFNVEFDDKGYMVRIHCTDGRVFKLDLPGDTNCILENYKLCNFHSTNGNQSINARKGGRLEIKNQEERKASGSSGHEPNDLLPMCPNRLESCVRQLLDDGISPFPYKVAKSMDPYMYRNIEFDCWNDMRKEAKLYNVYINDYNFKVGAKCKVELPNETEMYTCHVQNISKDKNYCHVFVERIGKEIVVPYESLHPLPPDEYRPWSLPFRYHRQMPRLPLPKYAGKANKSSKWKKNKLFEMDQYFEHSKCDLMPYMPVDNCYQGVHIQDDEQRDHNDPEQNDQNPTTEQRDREEPQAQKQHQRTKASRVQPQNSSSSQNQEVSGSAAPPPTQYMNYVPMIPSRPGHLPPPWPASPMAIAEEFPFPISGTPHPPPTEGCVYMPFGGYGPPPPGAVALSGPHPFMPLPSPPLNVTGIGEPRRSLHPNGEDLPVDMVTLRYFYNMGVDLHWRMSHHTPPDELGMFGYHQQNNTDQQAGRTVVIGATEDNLTAVESTPPPSPEVANATEQSPLEKSAYAKRNLNSVKVRGKRPEQLQDIKDSLGPAAFLPTPTPSPSSNGSQFSFYTTPSPHHHLITPPRLLQPPPPPPIFYHKAGPPQLGGAAQGQTPYAWGMPAPVVSPYEVINNYNMDPSAQPQQQQPATLQPAPLSVQSQPAAVYAATRHH.

The disordered stretch occupies residues 1–20; sequence MDMQVQRPITSGSRQAPDPY. Positions 29–150 constitute an OTU domain; that stretch reads LYRKHTARDA…ENHFDSVYDV (122 aa). Asp37 is an active-site residue. Catalysis depends on Ser40, which acts as the Nucleophile. Residue His143 is part of the active site. Residues 336–396 form the Tudor domain; the sequence is NFKVGAKCKV…HPLPPDEYRP (61 aa). Residues 396–853 form an LC domain region; it reads PWSLPFRYHR…AAVYAATRHH (458 aa). The segment covering 460 to 470 has biased composition (basic and acidic residues); that stretch reads QDDEQRDHNDP. 4 disordered regions span residues 460-531, 681-704, 732-794, and 817-853; these read QDDE…YVPM, AVESTPPPSPEVANATEQSPLEKS, GPAA…AAQG, and NMDPSAQPQQQQPATLQPAPLSVQSQPAAVYAATRHH. Low complexity predominate over residues 499–517; sequence SRVQPQNSSSSQNQEVSGS. Polar residues predominate over residues 747 to 758; sequence NGSQFSFYTTPS. Over residues 769–778 the composition is skewed to pro residues; it reads LLQPPPPPPI. Low complexity-rich tracts occupy residues 783-794 and 820-838; these read AGPPQLGGAAQG and PSAQPQQQQPATLQPAPLS.

As to quaternary structure, self aggregates, forming amyloid-like fibrillar helical structures; protein aggregation is mediated by the C-terminal LC domain, is enhanced by RNA binding and is essential for deubiquitinase activity. Interacts (via OTU domain) with bam (via C-terminus); the interaction enhances otu aggregation and deubiquitinase activity. Together with bam interacts with CycA/cyclin-A; the interaction stabilizes CycA by promoting its deubiquitination. Together with bam interacts with Traf6. Interacts with Hrb27C; the interaction is RNA-independent. Associates (via N-terminus) with mRNP complexes; the interaction is weak. As to expression, expressed at high levels in the ovary, at low levels in the brain and fat body, and at moderate levels in the gut.

It localises to the cytoplasm. The protein resides in the cell cortex. It is found in the perinuclear region. Its activity is regulated as follows. Activated by protein aggregation, which is mediated by the LC domain and enhanced by RNA binding. Catalytic component of a deubiquitinase complex consisting of bam and otu. The complex deubiquitinates K63-linked polyubiquitinated proteins; this antagonizes the ubiquitination activity of Traf6 and regulates the IMD immune signaling pathway. Otu-bam deubiquitinase activity is regulated by Traf6 dependent immune signaling regulation of bam expression levels; this forms a feedback loop that regulates the IMD immune signaling pathway and balances gut immune activity during aging. The complex deubiquitinates and stabilizes CycA/cyclin-A to regulate CycA-dependent differentiation. Involved in grk mRNA localization to the dorsal anterior region of the oocyte required for dorsal-ventral axis determination; may function as a ribonuclear protein complex together with sqd and Hrb27C. May regulate actin cytoskeleton organization in differentiating cystocytes during fusome maturation; required for efficient nurse cell cytoplasmic dumping during oogenesis. Essential for female fertility; involved in germ cell proliferation and germ cell differentiation. Functionally, involved in the early stages of germ cell proliferation and differentiation during oogenesis. Required for polytene chromosome dispersal in nurse cells during oogenesis. In terms of biological role, involved in the later stages of germ cell proliferation and differentiation during oogenesis. The polypeptide is Deubiquitinase otu (Drosophila melanogaster (Fruit fly)).